Here is a 230-residue protein sequence, read N- to C-terminus: Potassium/proton antiporter CemA (230 aa).

4 helical membrane-spanning segments follow: residues 7 to 27 (LPSL…SFSF), 106 to 126 (IILH…FFFL), 145 to 165 (LNDS…VGFH), and 181 to 201 (LGWA…PVIL).

Belongs to the CemA family.

It is found in the plastid. It localises to the chloroplast inner membrane. It carries out the reaction K(+)(in) + H(+)(out) = K(+)(out) + H(+)(in). Its function is as follows. Contributes to K(+)/H(+) antiport activity by supporting proton efflux to control proton extrusion and homeostasis in chloroplasts in a light-dependent manner to modulate photosynthesis. Prevents excessive induction of non-photochemical quenching (NPQ) under continuous-light conditions. Indirectly promotes efficient inorganic carbon uptake into chloroplasts. This Lolium perenne (Perennial ryegrass) protein is Potassium/proton antiporter CemA.